A 78-amino-acid polypeptide reads, in one-letter code: Acyl carrier protein (78 aa).

Residues 2 to 77 (DELFLRMRAL…DAYEFIKSKV (76 aa)) form the Carrier domain. At serine 37 the chain carries O-(pantetheine 4'-phosphoryl)serine.

Belongs to the acyl carrier protein (ACP) family. 4'-phosphopantetheine is transferred from CoA to a specific serine of apo-ACP by AcpS. This modification is essential for activity because fatty acids are bound in thioester linkage to the sulfhydryl of the prosthetic group.

It is found in the cytoplasm. Its pathway is lipid metabolism; fatty acid biosynthesis. Functionally, carrier of the growing fatty acid chain in fatty acid biosynthesis. This Treponema pallidum (strain Nichols) protein is Acyl carrier protein.